The following is a 315-amino-acid chain: Methionyl-tRNA formyltransferase (315 aa).

Position 112-115 (112-115 (SLLP)) interacts with (6S)-5,6,7,8-tetrahydrofolate.

This sequence belongs to the Fmt family.

It carries out the reaction L-methionyl-tRNA(fMet) + (6R)-10-formyltetrahydrofolate = N-formyl-L-methionyl-tRNA(fMet) + (6S)-5,6,7,8-tetrahydrofolate + H(+). Attaches a formyl group to the free amino group of methionyl-tRNA(fMet). The formyl group appears to play a dual role in the initiator identity of N-formylmethionyl-tRNA by promoting its recognition by IF2 and preventing the misappropriation of this tRNA by the elongation apparatus. The polypeptide is Methionyl-tRNA formyltransferase (Leptospira borgpetersenii serovar Hardjo-bovis (strain JB197)).